The following is a 358-amino-acid chain: Chorismate synthase (358 aa).

NADP(+) is bound by residues arginine 46 and arginine 52. FMN contacts are provided by residues 123–125, 239–240, glycine 283, 298–302, and arginine 324; these read RSS, NA, and KSVAT.

This sequence belongs to the chorismate synthase family. As to quaternary structure, homotetramer. FMNH2 serves as cofactor.

It catalyses the reaction 5-O-(1-carboxyvinyl)-3-phosphoshikimate = chorismate + phosphate. It participates in metabolic intermediate biosynthesis; chorismate biosynthesis; chorismate from D-erythrose 4-phosphate and phosphoenolpyruvate: step 7/7. Catalyzes the anti-1,4-elimination of the C-3 phosphate and the C-6 proR hydrogen from 5-enolpyruvylshikimate-3-phosphate (EPSP) to yield chorismate, which is the branch point compound that serves as the starting substrate for the three terminal pathways of aromatic amino acid biosynthesis. This reaction introduces a second double bond into the aromatic ring system. The sequence is that of Chorismate synthase from Parabacteroides distasonis (strain ATCC 8503 / DSM 20701 / CIP 104284 / JCM 5825 / NCTC 11152).